A 417-amino-acid chain; its full sequence is Serine protease hepsin (417 aa).

Residues 1–23 are Cytoplasmic-facing; sequence MAQKEGGRTVPCCSRPKVAALTA. Residues 24-44 form a helical; Signal-anchor for type II membrane protein membrane-spanning segment; the sequence is GTLLLLTAIGAASWAIVAVLL. The Extracellular segment spans residues 45 to 417; the sequence is RSDQEPLYPV…SEASGMVTQL (373 aa). Positions 54 to 151 constitute an SRCR domain; sequence VQVSSADARL…RGRFLATICQ (98 aa). 8 cysteine pairs are disulfide-bonded: C77/C140, C90/C150, C119/C138, C153/C277, C188/C204, C291/C359, C322/C338, and C349/C381. An N-linked (GlcNAc...) asparagine glycan is attached at N112. Positions 163-405 constitute a Peptidase S1 domain; sequence IVGGRDTSLG…FREWIFQAIK (243 aa). Residues H203 and D257 each act as charge relay system in the active site. Catalysis depends on S353, which acts as the Charge relay system.

Belongs to the peptidase S1 family.

The protein localises to the membrane. The catalysed reaction is Cleavage after basic amino-acid residues, with Arg strongly preferred to Lys.. Plays an essential role in cell growth and maintenance of cell morphology. May mediate the activating cleavage of HGF and MST1/HGFL. Plays a role in the proteolytic processing of ACE2. The protein is Serine protease hepsin (HPN) of Pongo abelii (Sumatran orangutan).